Here is a 364-residue protein sequence, read N- to C-terminus: Protein Wnt-16 (364 aa).

The N-terminal stretch at 1–29 (MDRAALLALPSLCALWAAVLSLLPCGTQG) is a signal peptide. Cystine bridges form between C81–C92, C138–C146, and C148–C167. N142 carries N-linked (GlcNAc...) asparagine glycosylation. Residue N188 is glycosylated (N-linked (GlcNAc...) asparagine). Intrachain disulfides connect C220–C234, C222–C229, C293–C324, C309–C319, C323–C363, C339–C354, C341–C351, and C346–C347. S226 carries the O-palmitoleoyl serine; by PORCN lipid modification. N310 is a glycosylation site (N-linked (GlcNAc...) asparagine).

It belongs to the Wnt family. Post-translationally, palmitoleoylation is required for efficient binding to frizzled receptors. Depalmitoleoylation leads to Wnt signaling pathway inhibition.

It localises to the secreted. It is found in the extracellular space. The protein localises to the extracellular matrix. In terms of biological role, ligand for members of the frizzled family of seven transmembrane receptors. Probable developmental protein. May be a signaling molecule which affects the development of discrete regions of tissues. Is likely to signal over only few cell diameters. In Mus musculus (Mouse), this protein is Protein Wnt-16 (Wnt16).